Reading from the N-terminus, the 324-residue chain is tRNA dimethylallyltransferase (324 aa).

17-24 (GPTASGKT) lines the ATP pocket. A substrate-binding site is contributed by 19–24 (TASGKT). Interaction with substrate tRNA regions lie at residues 42–45 (DSAL), 166–170 (QRIQR), 251–256 (RCVGYR), and 284–291 (KRQITWLR).

The protein belongs to the IPP transferase family. As to quaternary structure, monomer. It depends on Mg(2+) as a cofactor.

The catalysed reaction is adenosine(37) in tRNA + dimethylallyl diphosphate = N(6)-dimethylallyladenosine(37) in tRNA + diphosphate. In terms of biological role, catalyzes the transfer of a dimethylallyl group onto the adenine at position 37 in tRNAs that read codons beginning with uridine, leading to the formation of N6-(dimethylallyl)adenosine (i(6)A). The sequence is that of tRNA dimethylallyltransferase from Burkholderia ambifaria (strain MC40-6).